The following is a 117-amino-acid chain: uncharacterized protein (117 aa).

2 helical membrane-spanning segments follow: residues 9-29 and 56-76; these read ITSH…FIPF and VIIV…FFIP.

It localises to the membrane. This is an uncharacterized protein from Saccharomyces cerevisiae (strain ATCC 204508 / S288c) (Baker's yeast).